We begin with the raw amino-acid sequence, 249 residues long: 5'-nucleotidase SurE (249 aa).

Aspartate 9, aspartate 10, serine 40, and asparagine 92 together coordinate a divalent metal cation.

The protein belongs to the SurE nucleotidase family. A divalent metal cation is required as a cofactor.

It is found in the cytoplasm. The catalysed reaction is a ribonucleoside 5'-phosphate + H2O = a ribonucleoside + phosphate. Nucleotidase that shows phosphatase activity on nucleoside 5'-monophosphates. The sequence is that of 5'-nucleotidase SurE from Shewanella frigidimarina (strain NCIMB 400).